A 258-amino-acid chain; its full sequence is Hydroxyacylglutathione hydrolase (258 aa).

Zn(2+) contacts are provided by histidine 56, histidine 58, aspartate 60, histidine 61, histidine 112, aspartate 132, and histidine 170.

The protein belongs to the metallo-beta-lactamase superfamily. Glyoxalase II family. In terms of assembly, monomer. Zn(2+) serves as cofactor.

It catalyses the reaction an S-(2-hydroxyacyl)glutathione + H2O = a 2-hydroxy carboxylate + glutathione + H(+). It participates in secondary metabolite metabolism; methylglyoxal degradation; (R)-lactate from methylglyoxal: step 2/2. Its function is as follows. Thiolesterase that catalyzes the hydrolysis of S-D-lactoyl-glutathione to form glutathione and D-lactic acid. The chain is Hydroxyacylglutathione hydrolase from Pseudomonas aeruginosa (strain ATCC 15692 / DSM 22644 / CIP 104116 / JCM 14847 / LMG 12228 / 1C / PRS 101 / PAO1).